Consider the following 389-residue polypeptide: S-adenosylmethionine synthase (389 aa).

His-16 provides a ligand contact to ATP. A Mg(2+)-binding site is contributed by Asp-18. Glu-44 contacts K(+). Glu-57 and Gln-100 together coordinate L-methionine. A flexible loop region spans residues Gln-100–Glu-110. ATP-binding positions include Asp-167–Lys-169, Arg-233–Phe-234, Asp-242, Arg-248–Lys-249, Ala-265, and Lys-269. Residue Asp-242 coordinates L-methionine. Position 273 (Lys-273) interacts with L-methionine.

The protein belongs to the AdoMet synthase family. In terms of assembly, homotetramer; dimer of dimers. Requires Mg(2+) as cofactor. The cofactor is K(+).

The protein localises to the cytoplasm. The enzyme catalyses L-methionine + ATP + H2O = S-adenosyl-L-methionine + phosphate + diphosphate. The protein operates within amino-acid biosynthesis; S-adenosyl-L-methionine biosynthesis; S-adenosyl-L-methionine from L-methionine: step 1/1. Functionally, catalyzes the formation of S-adenosylmethionine (AdoMet) from methionine and ATP. The overall synthetic reaction is composed of two sequential steps, AdoMet formation and the subsequent tripolyphosphate hydrolysis which occurs prior to release of AdoMet from the enzyme. This is S-adenosylmethionine synthase from Acidithiobacillus ferrooxidans (strain ATCC 23270 / DSM 14882 / CIP 104768 / NCIMB 8455) (Ferrobacillus ferrooxidans (strain ATCC 23270)).